A 137-amino-acid polypeptide reads, in one-letter code: Small ribosomal subunit protein uS12 (137 aa).

At aspartate 89 the chain carries 3-methylthioaspartic acid. Residues 104 to 137 (TAGVNGRKQSRSKYGAKRPKPGQAAAAPAKGKKK) are disordered. Basic residues predominate over residues 111–123 (KQSRSKYGAKRPK). Residues 124 to 137 (PGQAAAAPAKGKKK) show a composition bias toward low complexity.

The protein belongs to the universal ribosomal protein uS12 family. In terms of assembly, part of the 30S ribosomal subunit. Contacts proteins S8 and S17. May interact with IF1 in the 30S initiation complex.

With S4 and S5 plays an important role in translational accuracy. Functionally, interacts with and stabilizes bases of the 16S rRNA that are involved in tRNA selection in the A site and with the mRNA backbone. Located at the interface of the 30S and 50S subunits, it traverses the body of the 30S subunit contacting proteins on the other side and probably holding the rRNA structure together. The combined cluster of proteins S8, S12 and S17 appears to hold together the shoulder and platform of the 30S subunit. This is Small ribosomal subunit protein uS12 from Cytophaga hutchinsonii (strain ATCC 33406 / DSM 1761 / CIP 103989 / NBRC 15051 / NCIMB 9469 / D465).